The primary structure comprises 226 residues: Calcium-binding protein 1 (226 aa).

A lipid anchor (N-myristoyl glycine) is attached at glycine 2. A lipid anchor (S-palmitoyl cysteine) is attached at cysteine 4. 4 consecutive EF-hand domains span residues glutamate 81–methionine 116, glycine 135–alanine 152, isoleucine 158–histidine 193, and valine 195–arginine 226. The Ca(2+) site is built by aspartate 94, aspartate 96, aspartate 98, tyrosine 100, and aspartate 105. The Ca(2+) site is built by aspartate 171, asparagine 173, aspartate 175, and glutamate 177. A Phosphoserine modification is found at serine 179. 6 residues coordinate Ca(2+): glutamate 182, aspartate 208, asparagine 210, aspartate 212, arginine 214, and glutamate 219.

Homodimer. Interacts (via C-terminus) with ITPR1, ITPR2 and ITPR3. This binding is calcium dependent and the interaction correlates with calcium concentration. An additional calcium-independent interaction with the N-terminus of ITPR1 results in a decreased InsP(3) binding to the receptor. Interacts with CACNA1A (via C-terminal CDB motif) in the pre- and postsynaptic membranes. Interacts with CACNA1C (via C-terminal C and IQ motifs). Interacts with CACNA1D. The binding to the C motif is calcium independent whereas the binding to IQ requires the presence of calcium and is mutually exclusive with calmodulin binding. Interacts with TRPC5 (via C-terminus). Interacts (via EF-hands 1 and 2) at microtubules with MAP1LC3B. Interacts with MYO1C. Interacts (via EF-hands 1 and 2) with NSMF (via the central NLS-containing motif region), the interaction occurs in a calcium dependent manner after synaptic NMDA receptor stimulation and prevents nuclear import of NSMF. Interacts with SPACA9. Phosphorylated. The phosphorylation regulates the activity.

The protein localises to the cytoplasm. It is found in the cytoskeleton. The protein resides in the perinuclear region. Its subcellular location is the cell membrane. It localises to the golgi apparatus. The protein localises to the postsynaptic density. Its function is as follows. Modulates calcium-dependent activity of inositol 1,4,5-triphosphate receptors (ITPRs). Inhibits agonist-induced intracellular calcium signaling. Enhances inactivation and does not support calcium-dependent facilitation of voltage-dependent P/Q-type calcium channels. Causes calcium-dependent facilitation and inhibits inactivation of L-type calcium channels by binding to the same sites as calmodulin in the C-terminal domain of CACNA1C, but has an opposite effect on channel function. Suppresses the calcium-dependent inactivation of CACNA1D. Inhibits TRPC5 channels. Prevents NMDA receptor-induced cellular degeneration. Required for the normal transfer of light signals through the retina. The protein is Calcium-binding protein 1 (CABP1) of Bos taurus (Bovine).